The sequence spans 338 residues: E3 ubiquitin-protein ligase SPL1 (338 aa).

Residues 1 to 21 (MIHLAGFTCCLGGVALYLLTR) traverse the membrane as a helical segment. Residues 22–223 (STGRDIKSIT…KLGDLSRRFK (202 aa)) lie on the Chloroplast intermembrane side of the membrane. A helical transmembrane segment spans residues 224–246 (YASMGLTVLGVILISKPVIEYIL). Residues 247-338 (KRIEDTLERR…IQQVLKIYRH (92 aa)) lie on the Cytoplasmic side of the membrane. The RING-type zinc finger occupies 291–326 (CVVCLDQKYNTAFVECGHMCCCTPCSLQLRTCPLCR).

It is found in the plastid. Its subcellular location is the chloroplast outer membrane. It carries out the reaction S-ubiquitinyl-[E2 ubiquitin-conjugating enzyme]-L-cysteine + [acceptor protein]-L-lysine = [E2 ubiquitin-conjugating enzyme]-L-cysteine + N(6)-ubiquitinyl-[acceptor protein]-L-lysine.. Its pathway is protein modification; protein ubiquitination. Functionally, possesses E3 ubiquitin-protein ligase activity. This Arabidopsis thaliana (Mouse-ear cress) protein is E3 ubiquitin-protein ligase SPL1.